The primary structure comprises 414 residues: CinA-like protein (414 aa).

This sequence belongs to the CinA family.

The polypeptide is CinA-like protein (Acidobacterium capsulatum (strain ATCC 51196 / DSM 11244 / BCRC 80197 / JCM 7670 / NBRC 15755 / NCIMB 13165 / 161)).